The sequence spans 255 residues: High-affinity branched-chain amino acid transport ATP-binding protein LivG (255 aa).

In terms of domain architecture, ABC transporter spans 6 to 254 (LAVNGLMMRF…PDVIRAYLGE (249 aa)). Residue 38-45 (GPNGAGKT) coordinates ATP.

This sequence belongs to the ABC transporter superfamily.

In terms of biological role, component of the high-affinity branched-chain amino acid transport system. In Salmonella typhi, this protein is High-affinity branched-chain amino acid transport ATP-binding protein LivG (livG).